The chain runs to 128 residues: MRFAIVVTGPAYGTQQASSAFQFAQALIAEGHELSSVFFYREGVYNANQLTSPASDEFDLVRSWQQLNMQHGVALNICVAAALRRGVVDETEAGRLGLASSNLQTGFTLSGLGALAEASLTCDRVVQF.

Cys78 acts as the Cysteine persulfide intermediate in catalysis.

This sequence belongs to the DsrE/TusD family. In terms of assembly, heterohexamer, formed by a dimer of trimers. The hexameric TusBCD complex contains 2 copies each of TusB, TusC and TusD. The TusBCD complex interacts with TusE.

Its subcellular location is the cytoplasm. Functionally, part of a sulfur-relay system required for 2-thiolation of 5-methylaminomethyl-2-thiouridine (mnm(5)s(2)U) at tRNA wobble positions. Accepts sulfur from TusA and transfers it in turn to TusE. The chain is Sulfurtransferase TusD from Escherichia coli O45:K1 (strain S88 / ExPEC).